We begin with the raw amino-acid sequence, 347 residues long: D-alanine--D-alanine ligase (347 aa).

In terms of domain architecture, ATP-grasp spans 131-333 (KRVLESAGIA…YPELIERLVD (203 aa)). Residue 161–216 (EEKLAYPVFTKPSNMGSSVGISKSENQEELRQALKLAFRYDSRVLVEQGVNAREIE) participates in ATP binding. The Mg(2+) site is built by aspartate 287, glutamate 300, and asparagine 302.

The protein belongs to the D-alanine--D-alanine ligase family. Requires Mg(2+) as cofactor. Mn(2+) is required as a cofactor.

The protein localises to the cytoplasm. The enzyme catalyses 2 D-alanine + ATP = D-alanyl-D-alanine + ADP + phosphate + H(+). It functions in the pathway cell wall biogenesis; peptidoglycan biosynthesis. Functionally, cell wall formation. This Streptococcus pneumoniae (strain ATCC BAA-255 / R6) protein is D-alanine--D-alanine ligase.